A 103-amino-acid polypeptide reads, in one-letter code: Putative RNA-binding protein RbpB (103 aa).

In terms of domain architecture, RRM spans Ser2–Pro79. Basic and acidic residues predominate over residues Val74–Gly85. Positions Val74–Tyr103 are disordered. A compositionally biased stretch (low complexity) spans Gly92 to Tyr103.

This is Putative RNA-binding protein RbpB (rbpB) from Nostoc sp. (strain PCC 7120 / SAG 25.82 / UTEX 2576).